The sequence spans 342 residues: Aquaporin-7 (342 aa).

The Cytoplasmic segment spans residues 1–36 (MVQTSRHRRSTRGSKMVSWSVMAKIQEILQKKMVRE). S20 is modified (phosphoserine). Residues 37 to 54 (FLAEFMSTYVMMVFGLGS) form a helical membrane-spanning segment. Over 55 to 67 (VAHMVLNKKYGSY) the chain is Extracellular. The helical transmembrane segment at 68–85 (LGVNLGFGFGVTMGVHVA) threads the bilayer. At 86–89 (GHIS) the chain is on the cytoplasmic side. The segment at residues 90-103 (GAHMNAAVTFANCA) is an intramembrane region (discontinuously helical). Residues 94–96 (NAA) carry the NPA 1 motif. Over 104 to 111 (LGRVPWRK) the chain is Cytoplasmic. Residues 112 to 132 (FPVYVLGQFLGSFLAAATIYT) traverse the membrane as a helical segment. The Extracellular segment spans residues 133–167 (LFYTAILHFSGGQLMVTGPVATAGIFATYLPDHMT). A helical membrane pass occupies residues 168–188 (LWRGFLNEAWLTGMLQLCLFA). Over 189–200 (ITDQENNAALPG) the chain is Cytoplasmic. A helical transmembrane segment spans residues 201 to 217 (TQALVIGILVVIIGVSL). The Extracellular portion of the chain corresponds to 218-221 (GMNT). Residues 222–235 (GYAINPSRDLPPRV) constitute an intramembrane region (discontinuously helical). An NPA 2 motif is present at residues 226–228 (NPS). The Extracellular portion of the chain corresponds to 236–253 (FTFIAGWGKEVFSEGENW). A helical transmembrane segment spans residues 254–275 (WWVPVVAPLLGACLGGIIYLVF). Topologically, residues 276 to 342 (IGSTTPREPL…LHESMALGHF (67 aa)) are cytoplasmic.

It belongs to the MIP/aquaporin (TC 1.A.8) family. Homotetramer; each monomer provides an independent glycerol/water pore. Two homotetramers on opposing membranes can dimerize, forming a cell-cell junction. Interacts with PLIN1. In terms of processing, phosphorylation by PKA could prevent the interaction with PLIN1.

It is found in the cell membrane. It localises to the cytoplasmic vesicle membrane. The protein resides in the lipid droplet. The enzyme catalyses glycerol(in) = glycerol(out). It carries out the reaction H2O(in) = H2O(out). It catalyses the reaction urea(in) = urea(out). Glycerol transport is regulated by pH, with the porin being permeable to glycerol at pH 7.4 but not at pH 5.5. Water permeability, however, is not influenced by pH. Aquaglyceroporins form homotetrameric transmembrane channels, with each monomer independently mediating glycerol and water transport across the plasma membrane along their osmotic gradient. Could also be permeable to urea. Mediates the efflux of glycerol, formed upon triglyceride hydrolysis, to avoid its accumulation in adipocytes and to make it available to other tissues. In the kidney, mediates the reabsorption of glycerol, preventing its loss in urine, again participating to energy homeostasis. In pancreatic beta cells, it also mediates the efflux of glycerol, regulating its intracellular levels. The sequence is that of Aquaporin-7 (AQP7) from Macaca fascicularis (Crab-eating macaque).